Consider the following 299-residue polypeptide: MNKKLSVQEIILTLQKYWAEQGCMLMEAYDTEKGAGTMSPYTFLRAIGPEPWNAAYVEPSRRPADGRYGENPNRLYQHHQFQVVMKPSPENIQELYLGSLKALGIDPLEHDIRFVEDNWENPSMGCAGVGWEVWLDGMEVTQFTYFQQVGGLEVNPVTSEVTYGLERLSSYIQDVESVFDLEWGNGVSYGDIFREPEFEHSKYSFEESNQAMLEKMFNDFEAEANRLIEEGLVHPAYDYILKCSHTFNLLDARGTVSVTERAGFLSRIRNMARKVARAFVEEREKLGFPLLKNNEEEAK.

It belongs to the class-II aminoacyl-tRNA synthetase family. As to quaternary structure, tetramer of two alpha and two beta subunits.

It is found in the cytoplasm. It catalyses the reaction tRNA(Gly) + glycine + ATP = glycyl-tRNA(Gly) + AMP + diphosphate. The chain is Glycine--tRNA ligase alpha subunit from Pediococcus pentosaceus (strain ATCC 25745 / CCUG 21536 / LMG 10740 / 183-1w).